The following is a 170-amino-acid chain: Cathelicidin antimicrobial peptide (170 aa).

The N-terminal stretch at Met1–Gly30 is a signal peptide. The propeptide at Arg31–Lys131 is cathelin-like domain (CLD). The cathelin-like domain (CLD) stretch occupies residues Arg31 to Lys131. 2 disulfides stabilise this stretch: Cys86–Cys97 and Cys108–Cys125. Positions Leu150–Gly162 are active core.

It belongs to the cathelicidin family. Monomer, homodimer or homotrimer (in vitro). Oligomerizes as tetra- or hexamer in solution (in vitro). Proteolytically cleaved by proteinase PRTN3 into antibacterial peptide LL-37. Proteolytically cleaved by cathepsin CTSG and neutrophil elastase ELANE. In terms of processing, resistant to proteolytic degradation in solution, and when bound to both zwitterionic (mimicking mammalian membranes) and negatively charged membranes (mimicking bacterial membranes). Post-translationally, after secretion onto the skin surface, the CAMP gene product is processed by a serine protease-dependent mechanism into multiple novel antimicrobial peptides distinct from and shorter than cathelicidin LL-37. These peptides show enhanced antimicrobial action, acquiring the ability to kill skin pathogens such as S.aureus, E.coli and C.albicans. These peptides have lost the ability to stimulate CXCL8/IL8 release from keratinocytes. The peptides act synergistically, killing bacteria at lower concentrations when present together, and maintain activity at increased salt condition.

The protein localises to the secreted. Its subcellular location is the vesicle. Antimicrobial protein that is an integral component of the innate immune system. Binds to bacterial lipopolysaccharides (LPS). Acts via neutrophil N-formyl peptide receptors to enhance the release of CXCL2. Postsecretory processing generates multiple cathelicidin antimicrobial peptides with various lengths which act as a topical antimicrobial defense in sweat on skin. The unprocessed precursor form, cathelicidin antimicrobial peptide, inhibits the growth of Gram-negative E.coli and E.aerogenes with efficiencies comparable to that of the mature peptide LL-37 (in vitro). Its function is as follows. Antimicrobial peptide that is an integral component of the innate immune system. Binds to bacterial lipopolysaccharides (LPS). Causes membrane permeabilization by forming transmembrane pores (in vitro). Causes lysis of E.coli. Exhibits antimicrobial activity against Gram-negative bacteria such as P.aeruginosa, S.typhimurium, E.aerogenes, E.coli and P.syringae, Gram-positive bacteria such as L.monocytogenes, S.epidermidis, S.pyogenes and S.aureus, as well as vancomycin-resistant enterococci (in vitro). Exhibits antimicrobial activity against methicillin-resistant S.aureus, P.mirabilis, and C.albicans in low-salt media, but not in media containing 100 mM NaCl (in vitro). Forms chiral supramolecular assemblies with quinolone signal (PQS) molecules of P.aeruginosa, which may lead to interference of bacterial quorum signaling and perturbance of bacterial biofilm formation. May form supramolecular fiber-like assemblies on bacterial membranes. Induces cytokine and chemokine producation as well as TNF/TNFA and CSF2/GMCSF production in normal human keratinocytes. Exhibits hemolytic activity against red blood cells. In terms of biological role, exhibits antimicrobial activity against E.coli and B.megaterium (in vitro). The polypeptide is Cathelicidin antimicrobial peptide (Saguinus oedipus (Cotton-top tamarin)).